Reading from the N-terminus, the 354-residue chain is Serum paraoxonase/arylesterase 2 (354 aa).

Asn-29 carries N-linked (GlcNAc...) asparagine glycosylation. A disulfide bridge links Cys-42 with Cys-352. Ca(2+)-binding residues include Glu-53 and Asp-54. Residue His-114 is the Proton acceptor of the active site. Ca(2+)-binding residues include Ile-116, Asn-167, Asp-168, and Asn-223. A glycan (N-linked (GlcNAc...) asparagine) is linked at Asn-254. Ca(2+)-binding residues include Asp-268 and Asn-269. 2 N-linked (GlcNAc...) asparagine glycosylation sites follow: Asn-269 and Asn-323.

It belongs to the paraoxonase family. Requires Ca(2+) as cofactor. Glycosylated. Post-translationally, the signal sequence is not cleaved.

The protein resides in the membrane. It carries out the reaction a phenyl acetate + H2O = a phenol + acetate + H(+). It catalyses the reaction An aryl dialkyl phosphate + H2O = dialkyl phosphate + an aryl alcohol.. Its function is as follows. The absence of paraoxonase activity in turkey and chicken blood and in turkey liver indicates that PON2, if expressed, does not hydrolyze paraoxon. The polypeptide is Serum paraoxonase/arylesterase 2 (PON2) (Gallus gallus (Chicken)).